Consider the following 153-residue polypeptide: FAD synthase (153 aa).

ATP contacts are provided by residues 9 to 10 (TF), 14 to 17 (HPGH), D97, and Y124.

Belongs to the archaeal FAD synthase family. As to quaternary structure, homodimer. The cofactor is a divalent metal cation.

It catalyses the reaction FMN + ATP + H(+) = FAD + diphosphate. It functions in the pathway cofactor biosynthesis; FAD biosynthesis; FAD from FMN: step 1/1. Functionally, catalyzes the transfer of the AMP portion of ATP to flavin mononucleotide (FMN) to produce flavin adenine dinucleotide (FAD) coenzyme. In Methanobrevibacter smithii (strain ATCC 35061 / DSM 861 / OCM 144 / PS), this protein is FAD synthase.